Reading from the N-terminus, the 339-residue chain is 7,8-didemethyl-8-hydroxy-5-deazariboflavin synthase (339 aa).

Residues 25 to 256 enclose the Radical SAM core domain; the sequence is ATYSPAYTIV…PDITIQIPPN (232 aa). Residues cysteine 39, cysteine 43, and cysteine 46 each coordinate [4Fe-4S] cluster.

It belongs to the radical SAM superfamily. CofG family. As to quaternary structure, consists of two subunits, CofG and CofH. The cofactor is [4Fe-4S] cluster.

It catalyses the reaction 5-amino-5-(4-hydroxybenzyl)-6-(D-ribitylimino)-5,6-dihydrouracil + S-adenosyl-L-methionine = 7,8-didemethyl-8-hydroxy-5-deazariboflavin + 5'-deoxyadenosine + L-methionine + NH4(+) + H(+). It functions in the pathway cofactor biosynthesis; coenzyme F0 biosynthesis. Catalyzes the radical-mediated synthesis of 7,8-didemethyl-8-hydroxy-5-deazariboflavin from 5-amino-5-(4-hydroxybenzyl)-6-(D-ribitylimino)-5,6-dihydrouracil. The sequence is that of 7,8-didemethyl-8-hydroxy-5-deazariboflavin synthase from Nostoc sp. (strain PCC 7120 / SAG 25.82 / UTEX 2576).